Consider the following 116-residue polypeptide: ATP synthase lipid-binding protein, mitochondrial (116 aa).

Residues 1-24 (MYCQRLALPLTRSLLASRAPLALR) constitute a mitochondrion transit peptide. The helical transmembrane segment at 57 to 77 (VGVAGSGAGIGNVFGALVIGY) threads the bilayer. K84 is modified (N6,N6,N6-trimethyllysine). The chain crosses the membrane as a helical span at residues 92–112 (ILGFALSEAMGLFCLTMGFMI).

This sequence belongs to the ATPase C chain family. In terms of assembly, F-type ATPases have 2 components, CF(1) - the catalytic core - and CF(0) - the membrane proton channel. CF(1) has five subunits: alpha(3), beta(3), gamma(1), delta(1), epsilon(1). CF(0) has three main subunits: a, b and c. Post-translationally, trimethylated by ATPSCKMT at Lys-84. Methylation may be required for proper incorporation of the C subunit into the ATP synthase complex and mitochondrial respiration.

The protein resides in the mitochondrion membrane. Mitochondrial membrane ATP synthase (F(1)F(0) ATP synthase or Complex V) produces ATP from ADP in the presence of a proton gradient across the membrane which is generated by electron transport complexes of the respiratory chain. F-type ATPases consist of two structural domains, F(1) - containing the extramembraneous catalytic core and F(0) - containing the membrane proton channel, linked together by a central stalk and a peripheral stalk. During catalysis, ATP synthesis in the catalytic domain of F(1) is coupled via a rotary mechanism of the central stalk subunits to proton translocation. Part of the complex F(0) domain. A homomeric c-ring of probably 10 subunits is part of the complex rotary element. In Caenorhabditis briggsae, this protein is ATP synthase lipid-binding protein, mitochondrial.